Consider the following 320-residue polypeptide: Mitochondrial ribosome-associated GTPase 1 (320 aa).

Residues 37–209 (LKQMRASPRK…LLDTPGVLPP (173 aa)) enclose the CP-type G domain. GTP is bound by residues 81 to 84 (NKMD), 153 to 158 (NVGKSS), and glycine 205.

This sequence belongs to the TRAFAC class YlqF/YawG GTPase family. MTG1 subfamily.

The protein localises to the mitochondrion inner membrane. Functionally, plays a role in the regulation of the mitochondrial ribosome assembly and of translational activity. Displays mitochondrial GTPase activity. In Ictalurus punctatus (Channel catfish), this protein is Mitochondrial ribosome-associated GTPase 1.